The following is a 1260-amino-acid chain: Paraclostridial mosquitocidal protein 1 (1260 aa).

Position 208 (His208) interacts with Zn(2+). Glu209 (proton acceptor) is an active-site residue. His212 and Glu248 together coordinate Zn(2+). An intrachain disulfide couples Cys395 to Cys406. The segment at 401–824 (NRVNICIDVN…NIQSIPDFDI (424 aa)) is translocation domain (TD). Residues 825-1065 (NALIDRLGIQ…SYFNSNILRD (241 aa)) form an HCN region. The segment at 1066-1260 (FWGEPLEYNK…FVSEDEGWKE (195 aa)) is HCC.

It belongs to the peptidase M27 family. The cofactor is Zn(2+).

It catalyses the reaction Limited hydrolysis of proteins of the neuroexocytosis apparatus, synaptobrevins, SNAP25 or syntaxin. No detected action on small molecule substrates.. With respect to regulation, preincubation with the metalloprotease inhibitor 1,10-phenanthroline before injection into Anopheles or Aedes decreases toxicity. Functionally, neurotoxin active against Anopheles but not Aedes mosquitoes upon oral ingestion; expression of the ptox operon (ntnh-orfX1-orfX2-orfX3-pmp1) in B.thuringiensis kills Anopheles but not Aedes mosquito 3rd instar larvae. The ntnh-pmp1 construct is about half as toxic. PMP1 is toxic when injected directly into Anopheles or Aedes mosquito 3rd instar larvae, larvae no longer move, suggesting they are paralyzed. Adult mosquitoes (Anopheles or Aedes) and Drosophila lose the ability to fly in a dose-dependent manner by 24 hours after injection with 100 pg neurotoxin. Not toxic upon injection in mice. In terms of biological role, neurotoxin that cleaves A.gambiae syntaxin 1a, probably hydrolyzing the '240-Glu-|-His-241' bond. Does not cleave A.gambiae n-synaptobrevin or SNAP-25, nor human syntaxin 1A. Its function is as follows. Responsible for host epithelial cell transcytosis, host nerve cell targeting and translocation of PMP1 light chain (LC) into host cytosol. Composed of 3 subdomains; the translocation domain (TD), and N-terminus and C-terminus of the receptor-binding domain (RBD), called HCN and HCC. This is Paraclostridial mosquitocidal protein 1 from Paraclostridium bifermentans (Clostridium bifermentans).